The following is a 229-amino-acid chain: Potassium/proton antiporter CemA (229 aa).

2 helical membrane-spanning segments follow: residues 7–27 and 107–127; these read FTPLFYLASIVFLPWWISFSV and ILHFSTNIIWFGILSGYSILG.

The protein belongs to the CemA family.

It localises to the plastid. The protein resides in the chloroplast inner membrane. It carries out the reaction K(+)(in) + H(+)(out) = K(+)(out) + H(+)(in). In terms of biological role, contributes to K(+)/H(+) antiport activity by supporting proton efflux to control proton extrusion and homeostasis in chloroplasts in a light-dependent manner to modulate photosynthesis. Prevents excessive induction of non-photochemical quenching (NPQ) under continuous-light conditions. Indirectly promotes efficient inorganic carbon uptake into chloroplasts. This is Potassium/proton antiporter CemA from Solanum tuberosum (Potato).